The following is a 590-amino-acid chain: Aspartate--tRNA(Asp/Asn) ligase (590 aa).

E172 contributes to the L-aspartate binding site. The tract at residues 196-199 (QLFK) is aspartate. L-aspartate is bound at residue R218. ATP is bound by residues 218–220 (RDE) and Q227. L-aspartate is bound at residue H449. E484 is a binding site for ATP. Residue R491 participates in L-aspartate binding. 536-539 (GIDR) contacts ATP.

This sequence belongs to the class-II aminoacyl-tRNA synthetase family. Type 1 subfamily. As to quaternary structure, homodimer.

The protein resides in the cytoplasm. It catalyses the reaction tRNA(Asx) + L-aspartate + ATP = L-aspartyl-tRNA(Asx) + AMP + diphosphate. Functionally, aspartyl-tRNA synthetase with relaxed tRNA specificity since it is able to aspartylate not only its cognate tRNA(Asp) but also tRNA(Asn). Reaction proceeds in two steps: L-aspartate is first activated by ATP to form Asp-AMP and then transferred to the acceptor end of tRNA(Asp/Asn). This chain is Aspartate--tRNA(Asp/Asn) ligase, found in Francisella tularensis subsp. tularensis (strain SCHU S4 / Schu 4).